A 54-amino-acid polypeptide reads, in one-letter code: Large ribosomal subunit protein bL33 (54 aa).

Belongs to the bacterial ribosomal protein bL33 family.

The chain is Large ribosomal subunit protein bL33 from Rhodopirellula baltica (strain DSM 10527 / NCIMB 13988 / SH1).